Reading from the N-terminus, the 309-residue chain is Formimidoylglutamase (309 aa).

The Mn(2+) site is built by His120, Asp145, His147, Asp149, Asp236, and Asp238.

It belongs to the arginase family. It depends on Mn(2+) as a cofactor.

It carries out the reaction N-formimidoyl-L-glutamate + H2O = formamide + L-glutamate. It participates in amino-acid degradation; L-histidine degradation into L-glutamate; L-glutamate from N-formimidoyl-L-glutamate (hydrolase route): step 1/1. Its function is as follows. Catalyzes the conversion of N-formimidoyl-L-glutamate to L-glutamate and formamide. The polypeptide is Formimidoylglutamase (Chromobacterium violaceum (strain ATCC 12472 / DSM 30191 / JCM 1249 / CCUG 213 / NBRC 12614 / NCIMB 9131 / NCTC 9757 / MK)).